A 232-amino-acid chain; its full sequence is Lipoprotein-releasing system ATP-binding protein LolD (232 aa).

In terms of domain architecture, ABC transporter spans 11-232 (IEVTDLQRAF…LHDGRLIEEY (222 aa)). 47–54 (GPSGAGKS) is a binding site for ATP.

This sequence belongs to the ABC transporter superfamily. Lipoprotein translocase (TC 3.A.1.125) family. In terms of assembly, the complex is composed of two ATP-binding proteins (LolD) and two transmembrane proteins (LolC and LolE).

It localises to the cell inner membrane. Functionally, part of the ABC transporter complex LolCDE involved in the translocation of mature outer membrane-directed lipoproteins, from the inner membrane to the periplasmic chaperone, LolA. Responsible for the formation of the LolA-lipoprotein complex in an ATP-dependent manner. This is Lipoprotein-releasing system ATP-binding protein LolD from Zymomonas mobilis subsp. mobilis (strain ATCC 31821 / ZM4 / CP4).